The chain runs to 133 residues: Probable non-specific lipid-transfer protein 2 (133 aa).

The N-terminal stretch at 1–31 (MRTVSMAALVVIAAALAWTSSAEPAPAPAPG) is a signal peptide. 4 disulfides stabilise this stretch: Cys-35–Cys-83, Cys-45–Cys-60, Cys-61–Cys-106, and Cys-81–Cys-121.

Belongs to the plant LTP family.

Functionally, plant non-specific lipid-transfer proteins transfer phospholipids as well as galactolipids across membranes. May play a role in wax or cutin deposition in the cell walls of expanding epidermal cells and certain secretory tissues. The chain is Probable non-specific lipid-transfer protein 2 from Parietaria judaica (Pellitory-of-the-wall).